We begin with the raw amino-acid sequence, 204 residues long: Tumor necrosis factor alpha-induced protein 8-like protein 3 (204 aa).

Over residues 1–10 (MDSDSGEQSE) the composition is skewed to acidic residues. Positions 1–20 (MDSDSGEQSEGEPGTAAGPH) are disordered. A binding to phosphoinositides region spans residues 21-204 (VFSSKNLALQ…INKLLDDKIL (184 aa)).

The protein belongs to the TNFAIP8 family. As to expression, widely expressed (at protein level).

The protein resides in the cytoplasm. The protein localises to the cell membrane. Functionally, acts as a lipid transfer protein. Preferentially captures and shuttles two lipid second messengers, i.e., phosphatidylinositol 4,5- bisphosphate and phosphatidylinositol 3,4,5-trisphosphate and increases their levels in the plasma membrane. Additionally, may also function as a lipid-presenting protein to enhance the activity of the PI3K-AKT and MEK-ERK pathways. May act as a regulator of tumorigenesis through its activation of phospholipid signaling. This chain is Tumor necrosis factor alpha-induced protein 8-like protein 3 (Tnfaip8l3), found in Mus musculus (Mouse).